A 794-amino-acid chain; its full sequence is Zinc finger protein 148 (794 aa).

K6 is covalently cross-linked (Glycyl lysine isopeptide (Lys-Gly) (interchain with G-Cter in SUMO2)). The residue at position 51 (S51) is a Phosphoserine. Residues K88, K115, and K132 each participate in a glycyl lysine isopeptide (Lys-Gly) (interchain with G-Cter in SUMO2) cross-link. A C2H2-type 1 zinc finger spans residues 171 to 193 (HVCEHCNAAFRTNYHLQRHVFIH). T194 is subject to Phosphothreonine. C2H2-type zinc fingers lie at residues 199-221 (FQCSQCDMRFIQKYLLQRHEKIH) and 227-249 (FRCDECGMRFIQKYHMERHKRTH). A Phosphoserine modification is found at S250. The segment at 255–278 (YQCEYCLQYFSRTDRVLKHKRMCH) adopts a C2H2-type 4 zinc-finger fold. Residue K291 forms a Glycyl lysine isopeptide (Lys-Gly) (interchain with G-Cter in SUMO2) linkage. Residues 298 to 336 (EEDSGFSTSPKDNSLPKKKRQKTEKKSSGMDKESALDKS) are disordered. Phosphoserine is present on residues S301 and S306. A Glycyl lysine isopeptide (Lys-Gly) (interchain with G-Cter in SUMO2) cross-link involves residue K308. Basic and acidic residues predominate over residues 321–336 (EKKSSGMDKESALDKS). Residue K356 forms a Glycyl lysine isopeptide (Lys-Gly) (interchain with G-Cter in SUMO1); alternate linkage. Residue K356 forms a Glycyl lysine isopeptide (Lys-Gly) (interchain with G-Cter in SUMO2); alternate linkage. K402 is covalently cross-linked (Glycyl lysine isopeptide (Lys-Gly) (interchain with G-Cter in SUMO2)). S412 bears the Phosphoserine mark. Residues K421 and K424 each participate in a glycyl lysine isopeptide (Lys-Gly) (interchain with G-Cter in SUMO2) cross-link. Residues 574–588 (NSSEVPEVTPSENVG) show a composition bias toward polar residues. The interval 574–599 (NSSEVPEVTPSENVGSSSQASSSDKA) is disordered. An N6-acetyllysine modification is found at K607. 2 positions are modified to phosphoserine: S665 and S784.

It belongs to the krueppel C2H2-type zinc-finger protein family. Interacts with HNRNPDL. Interacts with the 5FMC complex; the interaction requires association with CHTOP. Interacts with CAVIN1. Post-translationally, sumoylated with SUMO2. Desumoylated by SENP3, resulting in the stimulation of transcription of its target genes.

The protein localises to the nucleus. Its function is as follows. Involved in transcriptional regulation. Represses the transcription of a number of genes including gastrin, stromelysin and enolase. Binds to the G-rich box in the enhancer region of these genes. This is Zinc finger protein 148 (ZNF148) from Pongo abelii (Sumatran orangutan).